The following is a 501-amino-acid chain: Acetyl-coenzyme A carboxylase carboxyl transferase subunit beta, chloroplastic (501 aa).

The CoA carboxyltransferase N-terminal domain maps to 231 to 501 (LWIECENCYG…LIQNEKESRS (271 aa)). Zn(2+) contacts are provided by C235, C238, C254, and C257. A C4-type zinc finger spans residues 235–257 (CENCYGLNYKKILKSKMNICEHC).

It belongs to the AccD/PCCB family. As to quaternary structure, acetyl-CoA carboxylase is a heterohexamer composed of biotin carboxyl carrier protein, biotin carboxylase and 2 subunits each of ACCase subunit alpha and ACCase plastid-coded subunit beta (accD). Zn(2+) is required as a cofactor.

It is found in the plastid. The protein resides in the chloroplast stroma. It carries out the reaction N(6)-carboxybiotinyl-L-lysyl-[protein] + acetyl-CoA = N(6)-biotinyl-L-lysyl-[protein] + malonyl-CoA. Its pathway is lipid metabolism; malonyl-CoA biosynthesis; malonyl-CoA from acetyl-CoA: step 1/1. In terms of biological role, component of the acetyl coenzyme A carboxylase (ACC) complex. Biotin carboxylase (BC) catalyzes the carboxylation of biotin on its carrier protein (BCCP) and then the CO(2) group is transferred by the transcarboxylase to acetyl-CoA to form malonyl-CoA. The polypeptide is Acetyl-coenzyme A carboxylase carboxyl transferase subunit beta, chloroplastic (Lotus japonicus (Lotus corniculatus var. japonicus)).